The following is a 29-amino-acid chain: uncharacterized protein (29 aa).

This is an uncharacterized protein from Saccharomyces cerevisiae (strain ATCC 204508 / S288c) (Baker's yeast).